The primary structure comprises 454 residues: Histidine--tRNA ligase (454 aa).

Belongs to the class-II aminoacyl-tRNA synthetase family. As to quaternary structure, homodimer.

It is found in the cytoplasm. It carries out the reaction tRNA(His) + L-histidine + ATP = L-histidyl-tRNA(His) + AMP + diphosphate + H(+). The sequence is that of Histidine--tRNA ligase from Phocaeicola vulgatus (strain ATCC 8482 / DSM 1447 / JCM 5826 / CCUG 4940 / NBRC 14291 / NCTC 11154) (Bacteroides vulgatus).